Reading from the N-terminus, the 62-residue chain is MTLAFQLAVFALIATSSILLISVPVVFASPDGWSSNKNVIFSGTSLWIGLVFLVGILNSLIS.

2 consecutive transmembrane segments (helical) span residues 8-28 and 41-61; these read AVFALIATSSILLISVPVVFA and FSGTSLWIGLVFLVGILNSLI.

Belongs to the PsbZ family. In terms of assembly, PSII is composed of 1 copy each of membrane proteins PsbA, PsbB, PsbC, PsbD, PsbE, PsbF, PsbH, PsbI, PsbJ, PsbK, PsbL, PsbM, PsbT, PsbY, PsbZ, Psb30/Ycf12, at least 3 peripheral proteins of the oxygen-evolving complex and a large number of cofactors. It forms dimeric complexes.

It localises to the plastid. Its subcellular location is the chloroplast thylakoid membrane. Its function is as follows. May control the interaction of photosystem II (PSII) cores with the light-harvesting antenna, regulates electron flow through the 2 photosystem reaction centers. PSII is a light-driven water plastoquinone oxidoreductase, using light energy to abstract electrons from H(2)O, generating a proton gradient subsequently used for ATP formation. The chain is Photosystem II reaction center protein Z from Coffea arabica (Arabian coffee).